Consider the following 556-residue polypeptide: DNA ligase B (556 aa).

K126 functions as the N6-AMP-lysine intermediate in the catalytic mechanism.

This sequence belongs to the NAD-dependent DNA ligase family. LigB subfamily.

The enzyme catalyses NAD(+) + (deoxyribonucleotide)n-3'-hydroxyl + 5'-phospho-(deoxyribonucleotide)m = (deoxyribonucleotide)n+m + AMP + beta-nicotinamide D-nucleotide.. Functionally, catalyzes the formation of phosphodiester linkages between 5'-phosphoryl and 3'-hydroxyl groups in double-stranded DNA using NAD as a coenzyme and as the energy source for the reaction. The polypeptide is DNA ligase B (Stutzerimonas stutzeri (strain A1501) (Pseudomonas stutzeri)).